The following is a 967-amino-acid chain: Mediator of RNA polymerase II transcription subunit 14 (967 aa).

Belongs to the Mediator complex subunit 14 family. As to quaternary structure, component of the Mediator complex.

It is found in the nucleus. Functionally, component of the Mediator complex, a coactivator involved in the regulated transcription of nearly all RNA polymerase II-dependent genes. Mediator functions as a bridge to convey information from gene-specific regulatory proteins to the basal RNA polymerase II transcription machinery. Mediator is recruited to promoters by direct interactions with regulatory proteins and serves as a scaffold for the assembly of a functional preinitiation complex with RNA polymerase II and the general transcription factors. The protein is Mediator of RNA polymerase II transcription subunit 14 (RGR1) of Eremothecium gossypii (strain ATCC 10895 / CBS 109.51 / FGSC 9923 / NRRL Y-1056) (Yeast).